A 449-amino-acid chain; its full sequence is Protein cortex (449 aa).

WD repeat units follow at residues 108 to 148 (TYSY…ISQG), 149 to 188 (YAEY…KIDS), 198 to 237 (NRNC…ISWR), 283 to 327 (DSDW…VRDT), 345 to 382 (TGEL…DQWG), and 386 to 425 (SGLD…KKMK). Residues 386–397 (SGLDRVRTMVFS) carry the D-box motif.

The protein belongs to the WD repeat CORT family.

It localises to the cytoplasm. In terms of biological role, controls wing pigmentation patterning by regulating scale cell development, thereby playing a key role in mimicry and crypsis. Probably acts as an activator of the anaphase promoting complex/cyclosome (APC/C) that promotes the ubiquitin ligase activity and substrate specificity of the APC/C. The sequence is that of Protein cortex from Heliconius erato (Crimson patched longwing butterfly).